The primary structure comprises 164 residues: CASP-like protein 1C1 (164 aa).

Topologically, residues 1 to 7 (MVKLTKR) are cytoplasmic. Residues 8–28 (IGGLVLRLAAFGAALAALIVM) traverse the membrane as a helical segment. Residues 29-51 (ITSRERASFLAISLEAKYTDMAA) are Extracellular-facing. Residues 52 to 72 (FKYFVIANAVVSVYSFLVLFL) traverse the membrane as a helical segment. The Cytoplasmic portion of the chain corresponds to 73 to 80 (PKESLLWK). The helical transmembrane segment at 81–101 (FVVVLDLVMTMLLTSSLSAAL) threads the bilayer. Topologically, residues 102–129 (AVAQVGKKGNANAGWLPICGQVPKFCDQ) are extracellular. The helical transmembrane segment at 130 to 150 (ITGALIAGFVALVLYVLLLLY) threads the bilayer. The Cytoplasmic portion of the chain corresponds to 151-164 (SLHAVVDPFLLQKS).

Belongs to the Casparian strip membrane proteins (CASP) family. As to quaternary structure, homodimer and heterodimers. Expressed in the stele of the root.

The protein localises to the cell membrane. The chain is CASP-like protein 1C1 from Arabidopsis thaliana (Mouse-ear cress).